The following is a 719-amino-acid chain: High-osmolarity-induced transcription protein 1 (719 aa).

Residues 68-88 show a composition bias toward polar residues; that stretch reads HISPTTGSESASGSNASTLRN. Disordered regions lie at residues 68–90, 102–159, 353–402, and 496–610; these read HISP…RNDG, AAIS…NEIS, THQQ…ASAA, and TTSE…TKPN. Basic and acidic residues predominate over residues 117-127; that stretch reads IGEKLSNEERV. Over residues 128 to 143 the composition is skewed to low complexity; that stretch reads NSNVSASNSTTAGTGR. Composition is skewed to polar residues over residues 144–159, 353–369, 387–398, and 496–522; these read MLSQ…NEIS, THQQ…NAST, TQSNNNASTNDH, and TTSE…STLP. Residues Ser-146 and Ser-153 each carry the phosphoserine modification. The segment covering 535–572 has biased composition (acidic residues); sequence DDDGYQEDDDDDGDDEGDGRDNEEDSTAEEDEVDDEIE. The segment covering 581-601 has biased composition (basic residues); the sequence is NKRRRSLHHKKSNSLNGRRKL.

It belongs to the HOT1 family. As to quaternary structure, interacts with HOG1. In terms of processing, hyperphosphorylated during acute stress.

It localises to the nucleus. Its function is as follows. Required for a complete transcriptional response to osmotic stress, through recruitment of HOG1 followed by pol II recruitment to the promoters of GPD1 and other HOG-dependent genes. The polypeptide is High-osmolarity-induced transcription protein 1 (HOT1) (Saccharomyces cerevisiae (strain ATCC 204508 / S288c) (Baker's yeast)).